Consider the following 726-residue polypeptide: Pre-mRNA-splicing factor CLF1 (726 aa).

16 HAT repeats span residues 55–87 (EFQARKRTEFESRIRYSRDSILAWTKYAQWEAS), 89–121 (NEYERSRSVFERALDVDPRSVDLWIKYTDMELK), 123–155 (RNINHARNLFDRAITLLPRVDALWYKYVYLEEL), 157–188 (LNVSGARQIFERWMQWEPNDKAWQSYIKLEER), 190–221 (NELDRASAIYERWIACRPIPKNWVTWAKFEED), 223–262 (GQPDKAREVFQTALEFFGDEEEQVEKAQSVFAAFARMETR), 264–298 (KEFERARVIYKFALARLPRSKSASLYAQYTKFEKQ), 308–340 (TVLGKRRIQYEEELAYDPTNYDAWFSLARLEED), 352–386 (VEPMRVREVYERAVANVPPALEKRYWRRYIYLWLQ), 396–432 (KDYDRARDVYKAAVKLVPHKTFTFAKLWLAYAYFEIR), 434–465 (LDVSAARKVLGAGIGMCPKPKLFTGYIELEMR), 467–499 (REFDRVRTLYEKFLTYDPSLSSAWIQWTQVESA), 501–534 (EDFERVRAIFELAVQQSLDMPEIVWKAYIDFEAG), 536–567 (GERERARNLYERLLERTSHVKVWISYALMEIA), 585–626 (GDAD…EHGD), and 635–667 (DMLPTTRKRWRKAEDGSGELEEYWDLVFPDDER). The interval 682–726 (AWAQQRAGQGEEGGLSYDLPSDSEDENEDGDEDGDGREEEGMDQD) is disordered. Positions 702–726 (SDSEDENEDGDEDGDGREEEGMDQD) are enriched in acidic residues.

It belongs to the crooked-neck family. Associated with the spliceosome.

The protein localises to the nucleus. Functionally, involved in pre-mRNA splicing and cell cycle progression. Required for the spliceosome assembly and initiation of the DNA replication. In Cryptococcus neoformans var. neoformans serotype D (strain B-3501A) (Filobasidiella neoformans), this protein is Pre-mRNA-splicing factor CLF1 (CLF1).